Reading from the N-terminus, the 200-residue chain is Probable GTP-binding protein EngB (200 aa).

Positions 23–197 (KNSEVVFIGR…RERVLKDVLG (175 aa)) constitute an EngB-type G domain. Residues 31–38 (GRSNVGKS), 58–62 (GKTQL), 83–86 (DLPG), 153–156 (TKMD), and 175–177 (FTA) each bind GTP. The Mg(2+) site is built by Ser-38 and Thr-60.

Belongs to the TRAFAC class TrmE-Era-EngA-EngB-Septin-like GTPase superfamily. EngB GTPase family. The cofactor is Mg(2+).

Functionally, necessary for normal cell division and for the maintenance of normal septation. The polypeptide is Probable GTP-binding protein EngB (Wolinella succinogenes (strain ATCC 29543 / DSM 1740 / CCUG 13145 / JCM 31913 / LMG 7466 / NCTC 11488 / FDC 602W) (Vibrio succinogenes)).